Here is a 1744-residue protein sequence, read N- to C-terminus: Retrotransposon-like protein 1 (1744 aa).

Disordered stretches follow at residues 1 to 416 (MIEP…SPEE), 823 to 859 (READ…DQSG), and 1287 to 1439 (SSET…EVPS). Over residues 19-30 (SSKQMESSEGSS) the composition is skewed to low complexity. The span at 31-40 (NTVEETPGSS) shows a compositional bias: polar residues. Residues 41–80 (GAQAGAQAGAQAEAQAETQVEAQAEAQAEAQVEAQVEAQA) show a composition bias toward low complexity. Polar residues predominate over residues 269-318 (DGSNQESSDGSNHELSNGSNHESSFGSNPESSDVSNLESSGGSNQESSDG). Residues 332–361 (SDNSNQELSDNSNQESSDSSNQSSDISNQE) are compositionally biased toward low complexity. Composition is skewed to acidic residues over residues 385–407 (SDQD…GEEE), 837–846 (GSDDLSESEP), and 1291–1437 (EDKE…DEEV). Transmembrane regions (helical) follow at residues 1473-1493 (FFRG…LVML) and 1520-1540 (LILD…AQLL).

As to expression, expressed in placenta and in various tissues in late-fetal stage.

It is found in the membrane. In terms of biological role, plays an essential role in capillaries endothelial cells for the maintenance of feto-maternal interface and for development of the placenta. The protein is Retrotransposon-like protein 1 (Rtl1) of Mus musculus (Mouse).